Here is a 594-residue protein sequence, read N- to C-terminus: UvrABC system protein C (594 aa).

The region spanning 14–91 is the GIY-YIG domain; sequence DSPGCYLHKD…IQENMPKYNI (78 aa). Residues 196-231 form the UVR domain; that stretch reads DKIIDDLRSKMLEASNKQEFERAAEYRDLISGIATM.

This sequence belongs to the UvrC family. Interacts with UvrB in an incision complex.

The protein resides in the cytoplasm. Functionally, the UvrABC repair system catalyzes the recognition and processing of DNA lesions. UvrC both incises the 5' and 3' sides of the lesion. The N-terminal half is responsible for the 3' incision and the C-terminal half is responsible for the 5' incision. This is UvrABC system protein C from Streptococcus equi subsp. zooepidemicus (strain MGCS10565).